The sequence spans 251 residues: Chloride intracellular channel protein 5 (251 aa).

The interval 1 to 98 (MTDSATANGD…EEFLEETLTP (98 aa)) is required for insertion into the membrane. The G-site signature appears at 32–35 (CPFS). The helical transmembrane segment at 34–54 (FSQRLFMILWLKGVVFNVTTV) threads the bilayer. The GST C-terminal domain occupies 101–241 (YPKLAARHRE…AADSEIELAY (141 aa)).

The protein belongs to the chloride channel CLIC family. As to quaternary structure, component of a multimeric complex consisting of several cytoskeletal proteins, including actin, ezrin, alpha-actinin, gelsolin, and IQGAP1. Interacts with AKAP9. Interacts with TPRN. TPRN, CLIC5 and PTPQR form concentric rings at the base of stereocilia and may form a complex. Interacts with EZR, MYO6 and RDX; the proteins may work together as a complex to stabilize linkages between the plasma membrane and subjacent actin cytoskeleton at the stereocilium base. As to expression, detected in cochlea, in cochlear and vestibular hair cell bundles in the organ of Corti (at protein level). Expressed neonatal and adult cardiomyocytes (at protein level).

It is found in the golgi apparatus. The protein resides in the cytoplasm. It localises to the cytoskeleton. Its subcellular location is the microtubule organizing center. The protein localises to the centrosome. It is found in the cell cortex. The protein resides in the membrane. It localises to the apical cell membrane. Its subcellular location is the mitochondrion. The protein localises to the cell projection. It is found in the stereocilium. The catalysed reaction is Na(+)(in) = Na(+)(out). The enzyme catalyses K(+)(in) = K(+)(out). It carries out the reaction chloride(in) = chloride(out). Its activity is regulated as follows. Inhibited by F-actin. Its function is as follows. In the soluble state, catalyzes glutaredoxin-like thiol disulfide exchange reactions with reduced glutathione as electron donor. Can insert into membranes and form non-selective ion channels almost equally permeable to Na(+), K(+) and Cl(-). Required for normal hearing. It is necessary for the formation of stereocilia in the inner ear and normal development of the organ of Corti. May play a role in the regulation of transepithelial ion absorption and secretion. Is required for the development and/or maintenance of the proper glomerular endothelial cell and podocyte architecture. Plays a role in formation of the lens suture in the eye, which is important for normal optical properties of the lens. This Rattus norvegicus (Rat) protein is Chloride intracellular channel protein 5 (Clic5).